The primary structure comprises 432 residues: Serine hydroxymethyltransferase (432 aa).

Residues leucine 127 and 131–133 (GHL) contribute to the (6S)-5,6,7,8-tetrahydrofolate site. Lysine 236 carries the N6-(pyridoxal phosphate)lysine modification.

Belongs to the SHMT family. Homodimer. The cofactor is pyridoxal 5'-phosphate.

Its subcellular location is the cytoplasm. The enzyme catalyses (6R)-5,10-methylene-5,6,7,8-tetrahydrofolate + glycine + H2O = (6S)-5,6,7,8-tetrahydrofolate + L-serine. Its pathway is one-carbon metabolism; tetrahydrofolate interconversion. It participates in amino-acid biosynthesis; glycine biosynthesis; glycine from L-serine: step 1/1. Catalyzes the reversible interconversion of serine and glycine with tetrahydrofolate (THF) serving as the one-carbon carrier. This reaction serves as the major source of one-carbon groups required for the biosynthesis of purines, thymidylate, methionine, and other important biomolecules. Also exhibits THF-independent aldolase activity toward beta-hydroxyamino acids, producing glycine and aldehydes, via a retro-aldol mechanism. The sequence is that of Serine hydroxymethyltransferase from Rhizobium rhizogenes (strain K84 / ATCC BAA-868) (Agrobacterium radiobacter).